The sequence spans 161 residues: Nucleotide-binding protein BamMC406_2474 (161 aa).

Belongs to the YajQ family.

Its function is as follows. Nucleotide-binding protein. The polypeptide is Nucleotide-binding protein BamMC406_2474 (Burkholderia ambifaria (strain MC40-6)).